The sequence spans 201 residues: Ribonuclease HII (201 aa).

Residues 12–201 (GIVCGIDEVG…FAPVAQYMLF (190 aa)) enclose the RNase H type-2 domain. Residues aspartate 18, glutamate 19, and aspartate 113 each contribute to the a divalent metal cation site.

Belongs to the RNase HII family. The cofactor is Mn(2+). Mg(2+) serves as cofactor.

Its subcellular location is the cytoplasm. It catalyses the reaction Endonucleolytic cleavage to 5'-phosphomonoester.. Its function is as follows. Endonuclease that specifically degrades the RNA of RNA-DNA hybrids. This Paramagnetospirillum magneticum (strain ATCC 700264 / AMB-1) (Magnetospirillum magneticum) protein is Ribonuclease HII (rnhB).